The following is a 96-amino-acid chain: 5-hydroxytryptamine receptor 2B (96 aa).

Residues 1–8 are Extracellular-facing; the sequence is CNQSTLQM. Residue N2 is glycosylated (N-linked (GlcNAc...) asparagine). Residues 9-30 form a helical membrane-spanning segment; sequence LLEIFVWIGYVSSGVNPLVYTL. The short motif at 24-28 is the NPxxY motif; important for ligand-induced conformation changes and signaling element; the sequence is NPLVY. Topologically, residues 31–96 are cytoplasmic; sequence FNKTFRDAFG…STMYQSPVRL (66 aa). Residue C45 is the site of S-palmitoyl cysteine attachment.

It belongs to the G-protein coupled receptor 1 family. In terms of assembly, interacts (via C-terminus) with MPDZ.

It is found in the cell membrane. It localises to the synapse. The protein localises to the synaptosome. G-protein coupled receptor for 5-hydroxytryptamine (serotonin). Also functions as a receptor for various ergot alkaloid derivatives and psychoactive substances. Ligand binding causes a conformation change that triggers signaling via guanine nucleotide-binding proteins (G proteins) and modulates the activity of downstream effectors. HTR2B is coupled to G(q)/G(11) G alpha proteins and activates phospholipase C-beta, releasing diacylglycerol (DAG) and inositol 1,4,5-trisphosphate (IP3) second messengers that modulate the activity of phosphatidylinositol 3-kinase and promote the release of Ca(2+) ions from intracellular stores, respectively. Beta-arrestin family members inhibit signaling via G proteins and mediate activation of alternative signaling pathways. Plays a role in the regulation of dopamine and 5-hydroxytryptamine release, 5-hydroxytryptamine uptake and in the regulation of extracellular dopamine and 5-hydroxytryptamine levels, and thereby affects neural activity. May play a role in the perception of pain. Plays a role in the regulation of behavior, including impulsive behavior. Required for normal proliferation of embryonic cardiac myocytes and normal heart development. Protects cardiomyocytes against apoptosis. Plays a role in the adaptation of pulmonary arteries to chronic hypoxia. Plays a role in vasoconstriction. Required for normal osteoblast function and proliferation, and for maintaining normal bone density. Required for normal proliferation of the interstitial cells of Cajal in the intestine. This Cavia porcellus (Guinea pig) protein is 5-hydroxytryptamine receptor 2B (HTR2B).